Consider the following 336-residue polypeptide: Putative transcription factor avaE (336 aa).

Residues 32–100 (TATRLNQTTF…VPLDQNESMP (69 aa)) constitute a DNA-binding region (WRKY).

It is found in the nucleus. It participates in secondary metabolite biosynthesis. Functionally, putative transcription factor; part of the cluster that mediates the biosynthesis of a highly modified cyclo-arginine-tryptophan dipeptide (cRW). The chain is Putative transcription factor avaE from Aspergillus versicolor.